The chain runs to 210 residues: MTNTEVGKTTRRARIERRTSESDIVVELDLDGTGQVHIDTGVSFYDHMLTALGSHASFDLTVCTKGDVEIEAHHTIEDTAIALGQAFGQALGNKKGIRRFGDAFIPMDETLVHAVVDVSGRPYCVHTGEPDHLQHNIISGSSVPYSTVINRHVFESLAANARIALHVRVLYGRDPHHITEAQYKAVARALSEAVKFDPRFSGVPSTKGVL.

The protein belongs to the imidazoleglycerol-phosphate dehydratase family.

The protein resides in the cytoplasm. The enzyme catalyses D-erythro-1-(imidazol-4-yl)glycerol 3-phosphate = 3-(imidazol-4-yl)-2-oxopropyl phosphate + H2O. Its pathway is amino-acid biosynthesis; L-histidine biosynthesis; L-histidine from 5-phospho-alpha-D-ribose 1-diphosphate: step 6/9. The chain is Imidazoleglycerol-phosphate dehydratase from Mycobacterium leprae (strain Br4923).